Reading from the N-terminus, the 294-residue chain is Acetyl-coenzyme A carboxylase carboxyl transferase subunit beta (294 aa).

Positions 25-294 constitute a CoA carboxyltransferase N-terminal domain; it reads VWTKCTSCEQ…PLVVPVDGSH (270 aa). Residues Cys-29, Cys-32, Cys-48, and Cys-51 each coordinate Zn(2+). The C4-type zinc-finger motif lies at 29–51; it reads CTSCEQVLYSAELERNLEVCPKC.

Belongs to the AccD/PCCB family. Acetyl-CoA carboxylase is a heterohexamer composed of biotin carboxyl carrier protein (AccB), biotin carboxylase (AccC) and two subunits each of ACCase subunit alpha (AccA) and ACCase subunit beta (AccD). It depends on Zn(2+) as a cofactor.

Its subcellular location is the cytoplasm. It carries out the reaction N(6)-carboxybiotinyl-L-lysyl-[protein] + acetyl-CoA = N(6)-biotinyl-L-lysyl-[protein] + malonyl-CoA. Its pathway is lipid metabolism; malonyl-CoA biosynthesis; malonyl-CoA from acetyl-CoA: step 1/1. Component of the acetyl coenzyme A carboxylase (ACC) complex. Biotin carboxylase (BC) catalyzes the carboxylation of biotin on its carrier protein (BCCP) and then the CO(2) group is transferred by the transcarboxylase to acetyl-CoA to form malonyl-CoA. This Aliivibrio fischeri (strain ATCC 700601 / ES114) (Vibrio fischeri) protein is Acetyl-coenzyme A carboxylase carboxyl transferase subunit beta.